A 46-amino-acid chain; its full sequence is U2-plectoxin-Pt1a (46 aa).

In terms of processing, contains 4 disulfide bonds. Expressed by the venom gland.

The protein localises to the secreted. Functionally, potent toxin that may paralyze and/or kill insect pests such as H.virescens (lepidoptera), S.exigua (beet armyworm) and M.sexta (tobacco hornworm). The protein is U2-plectoxin-Pt1a of Plectreurys tristis (Spider).